A 436-amino-acid polypeptide reads, in one-letter code: Tol-Pal system protein TolB (436 aa).

The N-terminal stretch at 1 to 28 (MRSFLKPLLTIAAMALGMTAVIPMPAWA) is a signal peptide.

The protein belongs to the TolB family. As to quaternary structure, the Tol-Pal system is composed of five core proteins: the inner membrane proteins TolA, TolQ and TolR, the periplasmic protein TolB and the outer membrane protein Pal. They form a network linking the inner and outer membranes and the peptidoglycan layer.

The protein resides in the periplasm. Its function is as follows. Part of the Tol-Pal system, which plays a role in outer membrane invagination during cell division and is important for maintaining outer membrane integrity. The protein is Tol-Pal system protein TolB of Mesorhizobium japonicum (strain LMG 29417 / CECT 9101 / MAFF 303099) (Mesorhizobium loti (strain MAFF 303099)).